The sequence spans 257 residues: Global transcriptional regulator CodY (257 aa).

The tract at residues 1–155 (MSLLSKTREL…AATVIGMEIL (155 aa)) is GAF domain. Positions 22, 24, 43, 44, 45, and 47 each coordinate GTP. Arginine 61, threonine 96, and phenylalanine 98 together coordinate L-isoleucine. Positions 153 and 158 each coordinate GTP. A DNA-binding region (H-T-H motif) is located at residues 203–222 (ASKVADRVGITRSVIVNALR).

It belongs to the CodY family. As to quaternary structure, homodimer. Homotetramer. May form homodimers under conditions in which energy sources are sufficient (active state) and homotetramers under insufficient nutrient conditions (inactive state).

Its subcellular location is the cytoplasm. With respect to regulation, activity of CodY is modulated by interaction with two types of effectors: the branched-chain amino acids (BCAAs) leucine, isoleucine and valine, which are signals of the nutritional status of the cell, and GTP, which may signal the energetic status of the cell. DNA-binding global transcriptional regulator which is involved in the adaptive response to starvation and acts by directly or indirectly controlling the expression of numerous genes in response to nutrient availability. During rapid exponential growth, CodY is highly active and represses genes whose products allow adaptation to nutrient depletion. This is Global transcriptional regulator CodY from Staphylococcus aureus (strain Mu3 / ATCC 700698).